Reading from the N-terminus, the 96-residue chain is MASIKPLGDRVLVEPRQEAEEKIGSIFVPDTAKEKPQEGKVVEIGSGKYEDGKLVPLEVKVGDTVLYGKYSGTEIKSEGKEYLIIRESDILAVVKK.

It belongs to the GroES chaperonin family. Heptamer of 7 subunits arranged in a ring. Interacts with the chaperonin GroEL.

It is found in the cytoplasm. In terms of biological role, together with the chaperonin GroEL, plays an essential role in assisting protein folding. The GroEL-GroES system forms a nano-cage that allows encapsulation of the non-native substrate proteins and provides a physical environment optimized to promote and accelerate protein folding. GroES binds to the apical surface of the GroEL ring, thereby capping the opening of the GroEL channel. This Leptospira borgpetersenii serovar Hardjo-bovis (strain JB197) protein is Co-chaperonin GroES.